The sequence spans 215 residues: 3-isopropylmalate dehydratase small subunit (215 aa).

This sequence belongs to the LeuD family. LeuD type 1 subfamily. In terms of assembly, heterodimer of LeuC and LeuD.

The enzyme catalyses (2R,3S)-3-isopropylmalate = (2S)-2-isopropylmalate. It participates in amino-acid biosynthesis; L-leucine biosynthesis; L-leucine from 3-methyl-2-oxobutanoate: step 2/4. Its function is as follows. Catalyzes the isomerization between 2-isopropylmalate and 3-isopropylmalate, via the formation of 2-isopropylmaleate. This chain is 3-isopropylmalate dehydratase small subunit, found in Stutzerimonas stutzeri (strain A1501) (Pseudomonas stutzeri).